The primary structure comprises 180 residues: MMKLIVLAAFIGVCAGGALPGYVAPQYRFAPDYYPEGRYRPNVEGNAAVLRSDSEVSEQGFRYAYETENGIRGEATGVESDGIQSQGSFAYTGADGQQYSVTYTADGNGFQPQGAHFPTPPPVPEAIVRSLQENARDEAAGIFDDGSYHEAKYDPASIAAKAQHQYHYQPNTRYFPRYHY.

Residues 1–16 form the signal peptide; it reads MMKLIVLAAFIGVCAG. The Chitin-binding type R&amp;R domain occupies 58–121; the sequence is EQGFRYAYET…PQGAHFPTPP (64 aa).

This is Cuticle protein 3 from Lonomia obliqua (Moth).